The chain runs to 109 residues: Flowering-promoting factor 1-like protein 1 (109 aa).

The D-box motif lies at 73–81 (RGSLDLISL).

This sequence belongs to the FPF1 family. Interacts with RPT4. Ubiquitinated. RPT4 mediates its proteasome-dependent degradation. Specifically expressed in the apical meristem, the elongation zone of root tip, steles of the branch zone, and the young lateral root. Also expressed in spikes. Expressed in roots and spikes (at protein level).

Its subcellular location is the cytoplasm. It is found in the nucleus. Functionally, GTP-binding protein that functions in the development of root systems, which are mediated by auxin. Acts as a cell cycle regulator during root development. Proteasome-mediated degradation of the protein is necessary for the transition of metaphase to anaphase in mitosis. This chain is Flowering-promoting factor 1-like protein 1 (RAA1), found in Oryza sativa subsp. japonica (Rice).